The following is a 512-amino-acid chain: GMP synthase [glutamine-hydrolyzing] (512 aa).

The Glutamine amidotransferase type-1 domain maps to 7-197 (TIIVLDFGSQ…VFGVCGCSEG (191 aa)). Residue Cys-84 is the Nucleophile of the active site. Catalysis depends on residues His-171 and Glu-173. In terms of domain architecture, GMPS ATP-PPase spans 198–387 (WNMENFIEVE…LGIPDEIVWR (190 aa)). 225–231 (SGGVDSS) lines the ATP pocket.

In terms of assembly, homodimer.

It catalyses the reaction XMP + L-glutamine + ATP + H2O = GMP + L-glutamate + AMP + diphosphate + 2 H(+). It functions in the pathway purine metabolism; GMP biosynthesis; GMP from XMP (L-Gln route): step 1/1. Its function is as follows. Catalyzes the synthesis of GMP from XMP. The protein is GMP synthase [glutamine-hydrolyzing] of Bacillus mycoides (strain KBAB4) (Bacillus weihenstephanensis).